A 64-amino-acid polypeptide reads, in one-letter code: Large ribosomal subunit protein bL35 (64 aa).

The protein belongs to the bacterial ribosomal protein bL35 family.

The protein is Large ribosomal subunit protein bL35 of Shewanella putrefaciens (strain CN-32 / ATCC BAA-453).